Reading from the N-terminus, the 181-residue chain is UPF0397 protein SUB0313 (181 aa).

5 consecutive transmembrane segments (helical) span residues 11–31 (AIGIGAALFVIIGLFVPITIF), 45–65 (LFSVLFGPVAGFFIGFIGHML), 69–89 (FAGYGVWWSWVLPSGLVGLGI), 114–134 (VQALVNLISWAIVAPLGDILI), and 147–167 (LFAAFANTFTIGIGGTLLLIA).

The protein belongs to the UPF0397 family.

It is found in the cell membrane. The polypeptide is UPF0397 protein SUB0313 (Streptococcus uberis (strain ATCC BAA-854 / 0140J)).